The sequence spans 124 residues: Ribonuclease pancreatic (124 aa).

The segment covering 1 to 13 (KESAAAKFERQHM) has biased composition (basic and acidic residues). The disordered stretch occupies residues 1–24 (KESAAAKFERQHMDPSTSSASSSN). Substrate is bound by residues K7 and R10. The Proton acceptor role is filled by H12. Intrachain disulfides connect C26-C84, C40-C95, C58-C110, and C65-C72. Substrate is bound by residues 41 to 45 (KPVNT), K66, and R85. The active-site Proton donor is the H119.

It belongs to the pancreatic ribonuclease family. Monomer. Interacts with and forms tight 1:1 complexes with RNH1. Dimerization of two such complexes may occur. Interaction with RNH1 inhibits this protein. Pancreas.

The protein localises to the secreted. The enzyme catalyses an [RNA] containing cytidine + H2O = an [RNA]-3'-cytidine-3'-phosphate + a 5'-hydroxy-ribonucleotide-3'-[RNA].. The catalysed reaction is an [RNA] containing uridine + H2O = an [RNA]-3'-uridine-3'-phosphate + a 5'-hydroxy-ribonucleotide-3'-[RNA].. Functionally, endonuclease that catalyzes the cleavage of RNA on the 3' side of pyrimidine nucleotides. Acts on single-stranded and double-stranded RNA. This Cervus elaphus (Red deer) protein is Ribonuclease pancreatic (RNASE1).